The following is a 180-amino-acid chain: E1B protein, small T-antigen (180 aa).

Positions glycine 142–asparagine 180 are disordered. Over residues glutamine 157–serine 172 the composition is skewed to basic and acidic residues.

Belongs to the adenoviridae E1B 19 kDa protein family.

The polypeptide is E1B protein, small T-antigen (Simian adenovirus serotype 7 (SAdV-7)).